Here is a 511-residue protein sequence, read N- to C-terminus: Small ribosomal subunit protein uS4m (511 aa).

The S4 RNA-binding domain occupies 202-272 (KRLDVVLYRS…IKNNLFSNIN (71 aa)).

It belongs to the universal ribosomal protein uS4 family.

The protein resides in the mitochondrion. This is Small ribosomal subunit protein uS4m (RPS4) from Prototheca wickerhamii.